A 439-amino-acid chain; its full sequence is Exodeoxyribonuclease 7 large subunit (439 aa).

Belongs to the XseA family. Heterooligomer composed of large and small subunits.

Its subcellular location is the cytoplasm. It catalyses the reaction Exonucleolytic cleavage in either 5'- to 3'- or 3'- to 5'-direction to yield nucleoside 5'-phosphates.. Its function is as follows. Bidirectionally degrades single-stranded DNA into large acid-insoluble oligonucleotides, which are then degraded further into small acid-soluble oligonucleotides. The protein is Exodeoxyribonuclease 7 large subunit of Haemophilus influenzae (strain 86-028NP).